The following is a 309-amino-acid chain: Homoserine kinase (309 aa).

91–101 (PIGSGLGSSAC) is an ATP binding site.

This sequence belongs to the GHMP kinase family. Homoserine kinase subfamily.

The protein resides in the cytoplasm. It carries out the reaction L-homoserine + ATP = O-phospho-L-homoserine + ADP + H(+). It functions in the pathway amino-acid biosynthesis; L-threonine biosynthesis; L-threonine from L-aspartate: step 4/5. Catalyzes the ATP-dependent phosphorylation of L-homoserine to L-homoserine phosphate. In Cronobacter sakazakii (strain ATCC BAA-894) (Enterobacter sakazakii), this protein is Homoserine kinase.